A 145-amino-acid polypeptide reads, in one-letter code: Superoxide dismutase [Mn/Fe] (145 aa).

Residues His10 and His64 each contribute to the Fe(3+) site. 2 residues coordinate Mn(2+): His10 and His64.

Belongs to the iron/manganese superoxide dismutase family. Mn(2+) is required as a cofactor. It depends on Fe(3+) as a cofactor.

The catalysed reaction is 2 superoxide + 2 H(+) = H2O2 + O2. Its function is as follows. Destroys superoxide anion radicals which are normally produced within the cells and which are toxic to biological systems. Catalyzes the dismutation of superoxide anion radicals into O2 and H2O2 by successive reduction and oxidation of the transition metal ion at the active site. This is Superoxide dismutase [Mn/Fe] (sodA) from Streptococcus acidominimus.